The chain runs to 115 residues: NADH-ubiquinone oxidoreductase chain 3 (115 aa).

3 consecutive transmembrane segments (helical) span residues 4–24, 55–75, and 84–104; these read LMVLTVNMMLSTCLILIAFWL, FFLVAITFLLFDLEIALLLPL, and INIMTLTSFILVSVLALGLAY.

Belongs to the complex I subunit 3 family. In terms of assembly, core subunit of respiratory chain NADH dehydrogenase (Complex I) which is composed of 45 different subunits. Interacts with TMEM186. Interacts with TMEM242.

The protein resides in the mitochondrion membrane. The catalysed reaction is a ubiquinone + NADH + 5 H(+)(in) = a ubiquinol + NAD(+) + 4 H(+)(out). In terms of biological role, core subunit of the mitochondrial membrane respiratory chain NADH dehydrogenase (Complex I) that is believed to belong to the minimal assembly required for catalysis. Complex I functions in the transfer of electrons from NADH to the respiratory chain. The immediate electron acceptor for the enzyme is believed to be ubiquinone. The chain is NADH-ubiquinone oxidoreductase chain 3 from Onychomys leucogaster (Northern grasshopper mouse).